The chain runs to 308 residues: Type II restriction enzyme MamI (308 aa).

It carries out the reaction Endonucleolytic cleavage of DNA to give specific double-stranded fragments with terminal 5'-phosphates.. A P subtype restriction enzyme that recognizes the double-stranded sequence 5'-GATNNNNATC-3' and cleaves after N-5. This Microbacterium ammoniaphilum protein is Type II restriction enzyme MamI.